The primary structure comprises 435 residues: MKKTHITEQKFADLGLNPQVVEGLEKKGFEFCTPIQALALPVLLSGQDIAGQAQTGTGKTLAFLTATFNHLLTTPAHEGRQPTQPRAIIMAPTRELAIQIYNDAEPLIASTGIKAALAYGGESYDKQLTKLQGGVDVLIGTTGRIIDFYKQRVFNLNNIQAVVLDEADRMFDLGFIKDIRFLFRRMPAPQERLNMLFSATLSYRVQELAFEHMHNPEHVVVEPEQKTGHRIQEELFYPSNEDKMALLQTLIEEEWPDRAIIFANTKYKCESIWAHLAADGHRVGLLTGDVPQKKREKILEQFTQGSVDLLVATDVAARGLHIPQVTHVFNYDLPDDCEDYVHRIGRTGRAGASGHSISFACEDYAINLPAIEEYIEHTIPVSDYDSSALIQDLPAPVRTPSARNQQRRTNTGGARSGDRKSNNRRPRQPRQHKEA.

The short motif at 9–37 (QKFADLGLNPQVVEGLEKKGFEFCTPIQA) is the Q motif element. In terms of domain architecture, Helicase ATP-binding spans 40–219 (LPVLLSGQDI…FEHMHNPEHV (180 aa)). ATP is bound at residue 53 to 60 (AQTGTGKT). The short motif at 165 to 168 (DEAD) is the DEAD box element. Residues 245-390 (ALLQTLIEEE…VSDYDSSALI (146 aa)) form the Helicase C-terminal domain. Positions 395–435 (APVRTPSARNQQRRTNTGGARSGDRKSNNRRPRQPRQHKEA) are disordered. The segment covering 401–413 (SARNQQRRTNTGG) has biased composition (polar residues). Over residues 422–435 (NNRRPRQPRQHKEA) the composition is skewed to basic residues.

The protein belongs to the DEAD box helicase family. RhlB subfamily. As to quaternary structure, component of the RNA degradosome, which is a multiprotein complex involved in RNA processing and mRNA degradation.

The protein localises to the cytoplasm. It catalyses the reaction ATP + H2O = ADP + phosphate + H(+). In terms of biological role, DEAD-box RNA helicase involved in RNA degradation. Has RNA-dependent ATPase activity and unwinds double-stranded RNA. This Vibrio vulnificus (strain CMCP6) protein is ATP-dependent RNA helicase RhlB.